The chain runs to 155 residues: SsrA-binding protein (155 aa).

It belongs to the SmpB family.

It is found in the cytoplasm. Its function is as follows. Required for rescue of stalled ribosomes mediated by trans-translation. Binds to transfer-messenger RNA (tmRNA), required for stable association of tmRNA with ribosomes. tmRNA and SmpB together mimic tRNA shape, replacing the anticodon stem-loop with SmpB. tmRNA is encoded by the ssrA gene; the 2 termini fold to resemble tRNA(Ala) and it encodes a 'tag peptide', a short internal open reading frame. During trans-translation Ala-aminoacylated tmRNA acts like a tRNA, entering the A-site of stalled ribosomes, displacing the stalled mRNA. The ribosome then switches to translate the ORF on the tmRNA; the nascent peptide is terminated with the 'tag peptide' encoded by the tmRNA and targeted for degradation. The ribosome is freed to recommence translation, which seems to be the essential function of trans-translation. The sequence is that of SsrA-binding protein from Streptococcus uberis (strain ATCC BAA-854 / 0140J).